The chain runs to 430 residues: mRNA cap guanine-N(7) methyltransferase (430 aa).

Residues M1–Q88 are disordered. Residues Q15–D37 are compositionally biased toward basic and acidic residues. Positions S136 to V419 constitute an mRNA cap 0 methyltransferase domain. Residue N145–N146 participates in mRNA binding. 6 residues coordinate S-adenosyl-L-methionine: K149, G167, D189, D218, Q244, and Y249.

The protein belongs to the class I-like SAM-binding methyltransferase superfamily. mRNA cap 0 methyltransferase family.

The protein resides in the nucleus. The enzyme catalyses a 5'-end (5'-triphosphoguanosine)-ribonucleoside in mRNA + S-adenosyl-L-methionine = a 5'-end (N(7)-methyl 5'-triphosphoguanosine)-ribonucleoside in mRNA + S-adenosyl-L-homocysteine. Its function is as follows. Responsible for methylating the 5'-cap structure of mRNAs. This is mRNA cap guanine-N(7) methyltransferase (ABD1) from Eremothecium gossypii (strain ATCC 10895 / CBS 109.51 / FGSC 9923 / NRRL Y-1056) (Yeast).